We begin with the raw amino-acid sequence, 202 residues long: NADH dehydrogenase [ubiquinone] iron-sulfur protein 7, mitochondrial (202 aa).

The N-terminal 56 residues, 1–56 (MLRRTSFNFTGRAMISRGSPEWSHRLDLKKGKKTTMMHKLGTSKPNNALQYAQMTL), are a transit peptide targeting the mitochondrion. [4Fe-4S] cluster is bound by residues Cys-77, Cys-78, Cys-142, and Cys-172.

It belongs to the complex I 20 kDa subunit family. In terms of assembly, complex I is composed of 45 different subunits This is a component of the iron-sulfur (IP) fragment of the enzyme. [4Fe-4S] cluster serves as cofactor.

It is found in the mitochondrion. It carries out the reaction a ubiquinone + NADH + 5 H(+)(in) = a ubiquinol + NAD(+) + 4 H(+)(out). Its function is as follows. Core subunit of the mitochondrial membrane respiratory chain NADH dehydrogenase (Complex I) that is believed to belong to the minimal assembly required for catalysis. Complex I functions in the transfer of electrons from NADH to the respiratory chain. The immediate electron acceptor for the enzyme is believed to be ubiquinone. The protein is NADH dehydrogenase [ubiquinone] iron-sulfur protein 7, mitochondrial (NDHK) of Trypanosoma brucei brucei.